The sequence spans 66 residues: MSEEKLKSKIEQASGGLKEGAGKLTGDKELEAKGFVEKTIAKGKELADDAKEAVEGAVDAVKEKLK.

Basic and acidic residues predominate over residues 1-10; that stretch reads MSEEKLKSKI. The interval 1 to 23 is disordered; sequence MSEEKLKSKIEQASGGLKEGAGK.

It belongs to the UPF0337 (CsbD) family.

This is UPF0337 protein SpyM3_1723 from Streptococcus pyogenes serotype M3 (strain ATCC BAA-595 / MGAS315).